A 294-amino-acid polypeptide reads, in one-letter code: Acetyl-coenzyme A carboxylase carboxyl transferase subunit beta (294 aa).

Residues 30–294 (IMTKCPECKK…PEVGGEADGE (265 aa)) form the CoA carboxyltransferase N-terminal domain. 4 residues coordinate Zn(2+): cysteine 34, cysteine 37, cysteine 53, and cysteine 56. A C4-type zinc finger spans residues 34-56 (CPECKKIMYTKELQKNLMVCNYC).

The protein belongs to the AccD/PCCB family. In terms of assembly, acetyl-CoA carboxylase is a heterohexamer composed of biotin carboxyl carrier protein (AccB), biotin carboxylase (AccC) and two subunits each of ACCase subunit alpha (AccA) and ACCase subunit beta (AccD). Requires Zn(2+) as cofactor.

It is found in the cytoplasm. It carries out the reaction N(6)-carboxybiotinyl-L-lysyl-[protein] + acetyl-CoA = N(6)-biotinyl-L-lysyl-[protein] + malonyl-CoA. The protein operates within lipid metabolism; malonyl-CoA biosynthesis; malonyl-CoA from acetyl-CoA: step 1/1. In terms of biological role, component of the acetyl coenzyme A carboxylase (ACC) complex. Biotin carboxylase (BC) catalyzes the carboxylation of biotin on its carrier protein (BCCP) and then the CO(2) group is transferred by the transcarboxylase to acetyl-CoA to form malonyl-CoA. The polypeptide is Acetyl-coenzyme A carboxylase carboxyl transferase subunit beta (Listeria monocytogenes serotype 4b (strain F2365)).